The following is a 769-amino-acid chain: Sensor histidine kinase ComP (769 aa).

Residues 1–9 (MKNLIKKFT) are Cytoplasmic-facing. A helical transmembrane segment spans residues 10-33 (IAVIVLSILYISYTTYISMNGIII). Residues 34–113 (GTKIHKNDKS…DFDLVTLNRP (80 aa)) lie on the Extracellular side of the membrane. The helical transmembrane segment at 114 to 134 (YSFFLFVLPLFFYFLSIICIF) threads the bilayer. Topologically, residues 135–144 (YILKVNKKRR) are cytoplasmic. The chain crosses the membrane as a helical span at residues 145 to 167 (SFAAYILILLLLDISIAYISAGG). Over 168-235 (PFRGHIINRY…QDYLQVDIDF (68 aa)) the chain is Extracellular. A helical transmembrane segment spans residues 236 to 257 (LATLNLVSFATLTLFSFSAIYL). Residues 258 to 272 (HLNKYKYAEHSFILK) are Cytoplasmic-facing. The helical transmembrane segment at 273–295 (LLILTNTLSFAPFLIFFVLPIIF) threads the bilayer. The Extracellular segment spans residues 296–299 (TGNY). The helical transmembrane segment at 300 to 323 (IFPALASASLLVLIPFGLVYQFVA) threads the bilayer. Residues 324-337 (NKMFDIEFILGRMR) are Cytoplasmic-facing. Residues 338–357 (YYALLAMIPTLLIVGALVLF) traverse the membrane as a helical segment. The Extracellular portion of the chain corresponds to 358-361 (DVMD). Residues 362–383 (IQMNPVRQTVFFFVVMFAVFYF) traverse the membrane as a helical segment. Over 384-769 (KEVMDFKFRL…GFKADIEIEL (386 aa)) the chain is Cytoplasmic. Positions 571-769 (LARDLHDSVL…GFKADIEIEL (199 aa)) constitute a Histidine kinase domain. Residue H576 is modified to Phosphohistidine; by autocatalysis.

In terms of processing, autophosphorylates on a histidine and transfers the phosphate group onto an aspartate in ComA, thus activating it.

The protein resides in the cell membrane. It catalyses the reaction ATP + protein L-histidine = ADP + protein N-phospho-L-histidine.. Functionally, sensor in the two-component regulatory system ComP/ComA involved in a major quorum response pathway that regulates the development of genetic competence. Plays a role in sporulation, at least partly interchangeable with that of SpoIIJ. Probably activates ComA by phosphorylation. The sequence is that of Sensor histidine kinase ComP (comP) from Bacillus subtilis (strain 168).